The sequence spans 224 residues: Urease accessory protein UreF (224 aa).

This sequence belongs to the UreF family. As to quaternary structure, ureD, UreF and UreG form a complex that acts as a GTP-hydrolysis-dependent molecular chaperone, activating the urease apoprotein by helping to assemble the nickel containing metallocenter of UreC. The UreE protein probably delivers the nickel.

The protein resides in the cytoplasm. In terms of biological role, required for maturation of urease via the functional incorporation of the urease nickel metallocenter. The sequence is that of Urease accessory protein UreF from Klebsiella pneumoniae subsp. pneumoniae (strain ATCC 700721 / MGH 78578).